We begin with the raw amino-acid sequence, 644 residues long: DNA mismatch repair protein MutL (644 aa).

2 disordered regions span residues 353–399 (SESG…SQLT) and 420–440 (GSMA…RARA). The segment covering 370–381 (SPESKTHSTWNE) has biased composition (polar residues). Basic and acidic residues predominate over residues 383-399 (SRVDTSRVEISRDSQLT).

It belongs to the DNA mismatch repair MutL/HexB family.

Functionally, this protein is involved in the repair of mismatches in DNA. It is required for dam-dependent methyl-directed DNA mismatch repair. May act as a 'molecular matchmaker', a protein that promotes the formation of a stable complex between two or more DNA-binding proteins in an ATP-dependent manner without itself being part of a final effector complex. The polypeptide is DNA mismatch repair protein MutL (Shewanella sp. (strain MR-4)).